We begin with the raw amino-acid sequence, 492 residues long: Vacuolar fusion protein CCZ1 homolog (492 aa).

Residues 255–275 are disordered; that stretch reads SVHAGPTSSSSNGTASVERPL. Over residues 260–269 the composition is skewed to polar residues; sequence PTSSSSNGTA.

The protein belongs to the CCZ1 family. Interacts with MON1.

It localises to the endosome. Its subcellular location is the prevacuolar compartment. Plays an important role in membrane trafficking through the secretory apparatus. In complex with MON1, acts as a guanine exchange factor (GEF) for Rab7 protein family. Promotes the exchange of GDP to GTP, converting it from an inactive GDP-bound form into an active GTP-bound form. The active form is involved in protein trafficking from prevacuolar compartments (PVCs) to vacuoles. May serve as a linker between Rab5 and Rab7 protein families in PVCs and mediate PVC maturation. This Oryza sativa subsp. japonica (Rice) protein is Vacuolar fusion protein CCZ1 homolog.